A 661-amino-acid polypeptide reads, in one-letter code: Ubiquitin carboxyl-terminal hydrolase 51 (661 aa).

Residues 1-144 (MRGTQGAQEM…SENSLLEVGS (144 aa)) form a disordered region. The span at 21 to 30 (TSENLTSRGS) shows a compositional bias: polar residues. Basic residues predominate over residues 53–71 (PRRKPRPRPQPRSRSRGGR). A compositionally biased stretch (pro residues) spans 75-96 (APPPPPAKPPPPPPAPPPPPLP). The segment at 149–267 (TGCCHVESFK…KETKEKILGL (119 aa)) adopts a UBP-type zinc-finger fold. The Zn(2+) site is built by Cys-151, His-153, Cys-192, Cys-195, Cys-205, Cys-208, Cys-213, His-218, His-222, His-228, Cys-241, and Cys-244. The USP domain maps to 320-656 (RGLINLGNTC…EGYLLFYHRQ (337 aa)). The active-site Nucleophile is Cys-329. His-615 serves as the catalytic Proton acceptor.

This sequence belongs to the peptidase C19 family. Interacts with H2A.

The protein localises to the chromosome. It carries out the reaction Thiol-dependent hydrolysis of ester, thioester, amide, peptide and isopeptide bonds formed by the C-terminal Gly of ubiquitin (a 76-residue protein attached to proteins as an intracellular targeting signal).. In terms of biological role, specifically deubiquitinates 'Lys-14' (H2AK13Ub) and 'Lys-16'(H2AK15Ub) of histone H2A regulating the DNA damage response at double-strand breaks (DSBs). USP51 is recruited to chromatin after DNA damage and regulates the dynamic assembly/disassembly of TP53BP1 and BRCA1. Functions in DNA double-strand break repair also by mediating the deubiquitination and subsequent stabilization of DGCR8, leading to the recruitment of DGCR8 binding partners to double strand breaks such as RNF168 or MDC1. In addition, promotes the deubiquitination and stabilization of the transcriptional repressor ZEB1. This Mus musculus (Mouse) protein is Ubiquitin carboxyl-terminal hydrolase 51.